Reading from the N-terminus, the 780-residue chain is LPS-assembly protein LptD (780 aa).

Residues 1 to 24 (MKKRLPTLLASLIGSALYSQQALA) form the signal peptide.

Belongs to the LptD family. In terms of assembly, component of the lipopolysaccharide transport and assembly complex. Interacts with LptE and LptA.

The protein localises to the cell outer membrane. In terms of biological role, together with LptE, is involved in the assembly of lipopolysaccharide (LPS) at the surface of the outer membrane. This is LPS-assembly protein LptD from Sodalis glossinidius (strain morsitans).